Consider the following 972-residue polypeptide: Coatomer subunit beta (972 aa).

5 HEAT repeats span residues 79 to 113 (LLYFYWEIVPKLDQDGKLRHEMILVCNAIQHDLQH), 133 to 170 (ELLEQMVPSTLACLEYRHAYVRKYAILAVLSIYKVSEH), 317 to 354 (GCLEELTLDILRVLNAEDIDVRSKALTIAMDLVTSRNI), 397 to 434 (EIAANIVSLLLDFITDLNSVAANGVIAFVKDVVELYPQ), and 481 to 518 (RQSIGEIPILQTELKNQRKSQDEDDEATEESATKQAGP). Residues 494-522 (LKNQRKSQDEDDEATEESATKQAGPVILP) form a disordered region.

As to quaternary structure, oligomeric complex that consists of at least the alpha, beta, beta', gamma, delta, epsilon and zeta subunits.

It is found in the cytoplasm. The protein resides in the golgi apparatus membrane. It localises to the cytoplasmic vesicle. Its subcellular location is the COPI-coated vesicle membrane. Its function is as follows. The coatomer is a cytosolic protein complex that binds to dilysine motifs and reversibly associates with Golgi non-clathrin-coated vesicles, which further mediate biosynthetic protein transport from the ER, via the Golgi up to the trans Golgi network. Coatomer complex is required for budding from Golgi membranes, and is essential for the retrograde Golgi-to-ER transport of dilysine-tagged proteins. The polypeptide is Coatomer subunit beta (Candida glabrata (strain ATCC 2001 / BCRC 20586 / JCM 3761 / NBRC 0622 / NRRL Y-65 / CBS 138) (Yeast)).